Reading from the N-terminus, the 156-residue chain is Transcriptional repressor NrdR (156 aa).

Residues 3 to 34 (CPFCQHGHSRVIDSRVIEAGSAIRRRRECSQC) fold into a zinc finger. Positions 46–136 (LLVLKRNGVT…VYKSFESADD (91 aa)) constitute an ATP-cone domain.

This sequence belongs to the NrdR family. Zn(2+) serves as cofactor.

Functionally, negatively regulates transcription of bacterial ribonucleotide reductase nrd genes and operons by binding to NrdR-boxes. This chain is Transcriptional repressor NrdR, found in Corynebacterium efficiens (strain DSM 44549 / YS-314 / AJ 12310 / JCM 11189 / NBRC 100395).